The chain runs to 341 residues: Dihydroorotate dehydrogenase (quinone) (341 aa).

Residues 61-65 (AGLDK) and threonine 85 each bind FMN. Substrate is bound at residue lysine 65. 110–114 (NRMGF) contacts substrate. FMN is bound by residues asparagine 138 and asparagine 171. Asparagine 171 is a substrate binding site. The active-site Nucleophile is the serine 174. Position 176 (asparagine 176) interacts with substrate. Lysine 216 and threonine 244 together coordinate FMN. 245–246 (NT) is a substrate binding site. Residues glycine 267, glycine 296, and 317-318 (YS) each bind FMN.

It belongs to the dihydroorotate dehydrogenase family. Type 2 subfamily. In terms of assembly, monomer. FMN serves as cofactor.

The protein resides in the cell membrane. It catalyses the reaction (S)-dihydroorotate + a quinone = orotate + a quinol. Its pathway is pyrimidine metabolism; UMP biosynthesis via de novo pathway; orotate from (S)-dihydroorotate (quinone route): step 1/1. Functionally, catalyzes the conversion of dihydroorotate to orotate with quinone as electron acceptor. The polypeptide is Dihydroorotate dehydrogenase (quinone) (Pseudomonas putida (strain GB-1)).